Consider the following 159-residue polypeptide: Nascent polypeptide-associated complex subunit beta (159 aa).

Disordered regions lie at residues 1 to 39 and 124 to 159; these read MDME…GMDD and QSMQ…DKVE. The span at 23 to 32 shows a compositional bias: basic residues; it reads TPRRKVKNVH. The region spanning 36–101 is the NAC-A/B domain; it reads GMDDKKLQTS…GEDKELTELV (66 aa). Residues 136 to 153 show a composition bias toward acidic residues; sequence KDDEEDDDDIPDLVEGEN.

It belongs to the NAC-beta family. In terms of assembly, part of the nascent polypeptide-associated complex (NAC), consisting of EGD2 and EGD1. NAC associates with ribosomes via EGD1.

The protein resides in the cytoplasm. The protein localises to the nucleus. Component of the nascent polypeptide-associated complex (NAC), a dynamic component of the ribosomal exit tunnel, protecting the emerging polypeptides from interaction with other cytoplasmic proteins to ensure appropriate nascent protein targeting. The NAC complex also promotes mitochondrial protein import by enhancing productive ribosome interactions with the outer mitochondrial membrane and blocks the inappropriate interaction of ribosomes translating non-secretory nascent polypeptides with translocation sites in the membrane of the endoplasmic reticulum. EGD1 may act as a transcription factor that exert a negative effect on the expression of several genes that are transcribed by RNA polymerase II. The sequence is that of Nascent polypeptide-associated complex subunit beta (egd1) from Sclerotinia sclerotiorum (strain ATCC 18683 / 1980 / Ss-1) (White mold).